The chain runs to 251 residues: CDP-diacylglycerol pyrophosphatase (251 aa).

Residues Ala4 to Trp24 traverse the membrane as a helical segment.

It belongs to the Cdh family.

It localises to the cell inner membrane. The catalysed reaction is a CDP-1,2-diacyl-sn-glycerol + H2O = a 1,2-diacyl-sn-glycero-3-phosphate + CMP + 2 H(+). It functions in the pathway phospholipid metabolism; CDP-diacylglycerol degradation; phosphatidate from CDP-diacylglycerol: step 1/1. The sequence is that of CDP-diacylglycerol pyrophosphatase from Shigella boydii serotype 4 (strain Sb227).